The sequence spans 412 residues: Isocitrate dehydrogenase [NADP] cytoplasmic (412 aa).

Residues 75 to 77 (TIT) and Arg82 each bind NADP(+). Thr77 is a binding site for substrate. Substrate is bound by residues 94 to 100 (SPNGTIR), Arg109, and Arg132. Asp252 contacts Mn(2+). Position 260 (Lys260) interacts with NADP(+). Residue Asp275 participates in Mn(2+) binding. NADP(+) contacts are provided by residues 310-315 (GTVTRH) and Asn328.

Belongs to the isocitrate and isopropylmalate dehydrogenases family. As to quaternary structure, homodimer. Mg(2+) serves as cofactor. Mn(2+) is required as a cofactor. Post-translationally, the N-terminus is blocked.

It localises to the cytoplasm. It catalyses the reaction D-threo-isocitrate + NADP(+) = 2-oxoglutarate + CO2 + NADPH. Its activity is regulated as follows. By catabolite repression. Functionally, may function in the production of NADPH for fatty acid and sterol synthesis. The chain is Isocitrate dehydrogenase [NADP] cytoplasmic (IDP2) from Saccharomyces cerevisiae (strain ATCC 204508 / S288c) (Baker's yeast).